The primary structure comprises 284 residues: uncharacterized protein (284 aa).

The region spanning 4-133 (PLHLFWHRRD…AVHRQWDQLL (130 aa)) is the Photolyase/cryptochrome alpha/beta domain.

This is an uncharacterized protein from Synechococcus sp. (strain PCC 6716).